Reading from the N-terminus, the 262-residue chain is Putative hydro-lyase Sca_2211 (262 aa).

This sequence belongs to the D-glutamate cyclase family.

The protein is Putative hydro-lyase Sca_2211 of Staphylococcus carnosus (strain TM300).